The following is a 423-amino-acid chain: Gamma-glutamyl phosphate reductase (423 aa).

This sequence belongs to the gamma-glutamyl phosphate reductase family.

It is found in the cytoplasm. It carries out the reaction L-glutamate 5-semialdehyde + phosphate + NADP(+) = L-glutamyl 5-phosphate + NADPH + H(+). It participates in amino-acid biosynthesis; L-proline biosynthesis; L-glutamate 5-semialdehyde from L-glutamate: step 2/2. Catalyzes the NADPH-dependent reduction of L-glutamate 5-phosphate into L-glutamate 5-semialdehyde and phosphate. The product spontaneously undergoes cyclization to form 1-pyrroline-5-carboxylate. The polypeptide is Gamma-glutamyl phosphate reductase (Burkholderia ambifaria (strain MC40-6)).